Reading from the N-terminus, the 319-residue chain is tRNA uridine(34) hydroxylase (319 aa).

Residues 127 to 221 (KQEDTVIIDA…YGKDPEVQGE (95 aa)) enclose the Rhodanese domain. The Cysteine persulfide intermediate role is filled by cysteine 181.

Belongs to the TrhO family.

It catalyses the reaction uridine(34) in tRNA + AH2 + O2 = 5-hydroxyuridine(34) in tRNA + A + H2O. In terms of biological role, catalyzes oxygen-dependent 5-hydroxyuridine (ho5U) modification at position 34 in tRNAs. The chain is tRNA uridine(34) hydroxylase from Bacillus mycoides (strain KBAB4) (Bacillus weihenstephanensis).